Here is a 142-residue protein sequence, read N- to C-terminus: Hemoglobin subunit alpha-3 (142 aa).

In terms of domain architecture, Globin spans 2 to 142; the sequence is VLSAADKSNV…VSTVLTSKYR (141 aa). An O2-binding site is contributed by His59. His88 contacts heme b.

Belongs to the globin family. As to quaternary structure, heterotetramer of two alpha chains and two beta chains. As to expression, red blood cells.

Its function is as follows. Involved in oxygen transport from the lung to the various peripheral tissues. The protein is Hemoglobin subunit alpha-3 of Bubalus bubalis (Domestic water buffalo).